We begin with the raw amino-acid sequence, 208 residues long: Large ribosomal subunit protein uL3 (208 aa).

The tract at residues 123 to 146 (RHGQSRGPMAHGSRYHRRPGSMGP) is disordered.

Belongs to the universal ribosomal protein uL3 family. In terms of assembly, part of the 50S ribosomal subunit. Forms a cluster with proteins L14 and L19.

Functionally, one of the primary rRNA binding proteins, it binds directly near the 3'-end of the 23S rRNA, where it nucleates assembly of the 50S subunit. The chain is Large ribosomal subunit protein uL3 from Streptococcus thermophilus (strain CNRZ 1066).